The primary structure comprises 200 residues: Gamma-glutamyl-CDP-amidate hydrolase (200 aa).

The 181-residue stretch at Glu20–Glu200 folds into the Glutamine amidotransferase type-1 domain. Cys101 acts as the Nucleophile in catalysis. Residues His178 and Glu180 contribute to the active site.

It carries out the reaction N(5)-(cytidine 5'-diphosphoramidyl)-L-glutamine + H2O = cytidine 5'-diphosphoramidate + L-glutamate + H(+). Its pathway is capsule biogenesis; capsule polysaccharide biosynthesis. Involved in the biosynthesis of the O-methyl phosphoramidate (MeOPN) group found on the capsular polysaccharide (CPS) of C.jejuni. Catalyzes the hydrolysis of CDP-L-glutamine to L-glutamate and cytidine diphosphoramidate. This Campylobacter jejuni subsp. jejuni serotype O:2 (strain ATCC 700819 / NCTC 11168) protein is Gamma-glutamyl-CDP-amidate hydrolase.